The sequence spans 472 residues: Protein nucleotidyltransferase YdiU (472 aa).

ATP contacts are provided by glycine 86, glycine 88, arginine 89, lysine 109, aspartate 121, glycine 122, arginine 172, and arginine 179. The Proton acceptor role is filled by aspartate 244. Residues asparagine 245 and aspartate 254 each contribute to the Mg(2+) site. Aspartate 254 contributes to the ATP binding site.

It belongs to the SELO family. Mg(2+) is required as a cofactor. It depends on Mn(2+) as a cofactor.

The enzyme catalyses L-seryl-[protein] + ATP = 3-O-(5'-adenylyl)-L-seryl-[protein] + diphosphate. It carries out the reaction L-threonyl-[protein] + ATP = 3-O-(5'-adenylyl)-L-threonyl-[protein] + diphosphate. The catalysed reaction is L-tyrosyl-[protein] + ATP = O-(5'-adenylyl)-L-tyrosyl-[protein] + diphosphate. It catalyses the reaction L-histidyl-[protein] + UTP = N(tele)-(5'-uridylyl)-L-histidyl-[protein] + diphosphate. The enzyme catalyses L-seryl-[protein] + UTP = O-(5'-uridylyl)-L-seryl-[protein] + diphosphate. It carries out the reaction L-tyrosyl-[protein] + UTP = O-(5'-uridylyl)-L-tyrosyl-[protein] + diphosphate. Nucleotidyltransferase involved in the post-translational modification of proteins. It can catalyze the addition of adenosine monophosphate (AMP) or uridine monophosphate (UMP) to a protein, resulting in modifications known as AMPylation and UMPylation. This Ruegeria sp. (strain TM1040) (Silicibacter sp.) protein is Protein nucleotidyltransferase YdiU.